Consider the following 273-residue polypeptide: Undecaprenyl-diphosphatase (273 aa).

Helical transmembrane passes span 18 to 40 (GLTE…LLGF), 45 to 65 (AKTF…VVFW), 92 to 112 (GHIL…HEQI), 114 to 134 (AIFA…LLLA), 151 to 171 (LTYL…WPGF), 189 to 209 (YAAS…ATVL), 225 to 245 (MFAI…KFFL), and 253 to 273 (FVPF…ILIG).

This sequence belongs to the UppP family.

The protein resides in the cell inner membrane. It carries out the reaction di-trans,octa-cis-undecaprenyl diphosphate + H2O = di-trans,octa-cis-undecaprenyl phosphate + phosphate + H(+). Catalyzes the dephosphorylation of undecaprenyl diphosphate (UPP). Confers resistance to bacitracin. This Sodalis glossinidius (strain morsitans) protein is Undecaprenyl-diphosphatase.